The primary structure comprises 2362 residues: Filaggrin-2 (2362 aa).

The S-100-like stretch occupies residues 1–81; that stretch reads MAYLLRSVVT…TEFILMIFKL (81 aa). 2 consecutive EF-hand domains span residues 8 to 43 and 49 to 84; these read VVTI…EFRP and DDPD…LALA. Positions 62, 64, 66, 68, and 73 each coordinate Ca(2+). Disordered stretches follow at residues 96–238 and 284–2109; these read ASGS…GLSC and GCCR…SSIP. A compositionally biased stretch (acidic residues) spans 111–120; sequence EESETEEEEE. Basic and acidic residues-rich tracts occupy residues 159–174 and 189–214; these read KRLE…EESR and NKEK…PSRE. Filaggrin repeat units follow at residues 261 to 308 and 373 to 414; these read GYNT…NQSC and HSSC…SNGF. 3 stretches are compositionally biased toward polar residues: residues 284–317, 342–375, and 383–395; these read GCCR…CQSG, SCSQ…SHSS, and GATQ…QQRM. A compositionally biased stretch (low complexity) spans 396 to 411; sequence SSCGHSSSSHQKGCSS. Polar residues-rich tracts occupy residues 421-443 and 450-469; these read ASGS…SSGF and SGQS…SGYS. Composition is skewed to low complexity over residues 474–519, 539–550, and 567–580; these read GSGQ…QSSG, GSRQSSGSEQHG, and SQSS…SGSQ. Residues 555 to 607 form a Filaggrin 3 repeat; the sequence is QSSGSGKHETGPSQSSSSGHHGSGSQQHGGGSGQSTGFGEHESSSGHSSSSGQ. Residues 581-590 show a composition bias toward gly residues; the sequence is QHGGGSGQST. Residues 599–618 are compositionally biased toward low complexity; it reads SGHSSSSGQHRSGSRHSSGS. The segment covering 632 to 653 has biased composition (gly residues); sequence GHHGSGSQQHGGGSGNSTGFGE. The span at 654 to 675 shows a compositional bias: low complexity; it reads HGSSSHPLPSSGQNESSSGQSS. A Filaggrin 4 repeat occupies 672 to 723; it reads GQSSRSERHGTGSGQSSGFGQHGSGSHQSSSSGHNEYGSGQTSSSWPHGKGS. Residues 682-694 are compositionally biased toward gly residues; that stretch reads TGSGQSSGFGQHG. Low complexity-rich tracts occupy residues 695–705, 728–754, and 780–798; these read SGSHQSSSSGH, GYGE…QSSS, and GYGE…WQHG. The span at 826–838 shows a compositional bias: gly residues; that stretch reads TGSGQSLGFGQHG. A compositionally biased stretch (low complexity) spans 846-864; that stretch reads SSGHYESVSEPSSSSWQHG. The Filaggrin 5 repeat unit spans residues 880 to 927; that stretch reads HGQSSSAWNHGNESGQSNGYGEHESGHGQSSSAWNHGNESGQSNGFGE. Composition is skewed to polar residues over residues 886–896 and 912–925; these read AWNHGNESGQS and AWNH…SNGF. The segment covering 973–982 has biased composition (basic and acidic residues); it reads ESSEGEEHSV. Residues 984–1035 form a Filaggrin 6 repeat; the sequence is PRRYSGYGHGQGQAGHQQRESGYGQRGRPQGPSQDSSRQPQAGHGQPSQSGY. Polar residues predominate over residues 1014-1035; the sequence is GPSQDSSRQPQAGHGQPSQSGY. Positions 1047–1059 are enriched in basic and acidic residues; sequence EYSEGEAHSEVSQ. A compositionally biased stretch (basic residues) spans 1067–1077; sequence CHCHCHGQARH. The segment covering 1104–1121 has biased composition (low complexity); it reads GPGQPSQSGSRRSPRSQP. The segment covering 1142 to 1152 has biased composition (gly residues); it reads SGHGHGQGQGQ. Residues 1162–1174 are compositionally biased toward polar residues; the sequence is HGQQGRPQGPSQD. One copy of the Filaggrin 7 repeat lies at 1165–1210; sequence QGRPQGPSQDSSRQPQAGQGQPSQSGSGRSPRRSPVHPESSEGEEH. Low complexity predominate over residues 1175-1193; the sequence is SSRQPQAGQGQPSQSGSGR. A phosphoserine mark is found at Ser-1198, Ser-1204, and Ser-1205. Over residues 1220-1232 the composition is skewed to gly residues; sequence SGHGHGQGQGQGQ. The span at 1255 to 1273 shows a compositional bias: low complexity; sequence SSRQPQAGQGQPSQSGSGR. Residues Ser-1278, Ser-1284, and Ser-1285 each carry the phosphoserine modification. Residues 1280–1334 form a Filaggrin 8 repeat; that stretch reads VHPESSEGEEHSVVPQRHSGSGHGHGQGQGQAGHQQRESVHGQPVRPEVPTQDSS. Gly residues predominate over residues 1300–1310; that stretch reads SGHGHGQGQGQ. The span at 1333-1351 shows a compositional bias: low complexity; it reads SSRQPQAGQGQPSQSGSGR. Phosphoserine occurs at positions 1356, 1362, and 1363. The segment covering 1377–1396 has biased composition (basic and acidic residues); it reads ESCHCHCHDQAGHQQRESVH. Residues 1413-1436 are compositionally biased toward low complexity; that stretch reads PQAGPGQPSQSGSRRSPRSSPVHP. 2 positions are modified to phosphoserine: Ser-1438 and Ser-1439. Positions 1454–1464 are enriched in gly residues; sequence SGHGHGQGQGQ. A Filaggrin 9 repeat occupies 1474–1522; that stretch reads HGQRGRPQGPTQDSSRQPQAGQGQPSQSGSGRSPRRSPVHPESSEGEEH. The segment covering 1487–1505 has biased composition (low complexity); sequence SSRQPQAGQGQPSQSGSGR. A phosphoserine mark is found at Ser-1510, Ser-1516, and Ser-1517. The span at 1532–1544 shows a compositional bias: gly residues; the sequence is SGHGHGHGQGQGQ. The segment covering 1567-1585 has biased composition (low complexity); that stretch reads SSRQPQAGQGQPSQSGSGR. Phosphoserine is present on residues Ser-1590, Ser-1596, and Ser-1597. 2 stretches are compositionally biased toward low complexity: residues 1643–1661 and 1683–1696; these read SSRQ…GSGR and QRHS…GQGQ. Over residues 1698-1708 the composition is skewed to basic and acidic residues; the sequence is HAEHQQRESVH. The Filaggrin 10 repeat unit spans residues 1723–1756; sequence RQPQAGQGQPSLSGSGRSPRRSPVHPESSEGEEH. Residues 1724–1739 are compositionally biased toward low complexity; it reads QPQAGQGQPSLSGSGR. A phosphoserine mark is found at Ser-1744, Ser-1750, Ser-1751, Ser-1824, Ser-1830, and Ser-1831. Residues 1801–1825 show a composition bias toward low complexity; sequence SSRQPQAGQGQPSQSGSGRSPGRSP. Residues 1829-1848 are compositionally biased toward basic and acidic residues; the sequence is ESSEGEEHSVVPQRHSESGH. Residues 1879 to 1897 show a composition bias toward low complexity; sequence SSRQPQAGQGQPSQSGSGR. Residues Ser-1902, Ser-1908, and Ser-1909 each carry the phosphoserine modification. The segment covering 1924–1934 has biased composition (gly residues); that stretch reads SGHGHGQGQGQ. The segment covering 1949 to 1975 has biased composition (low complexity); the sequence is RPQGPSQDSSSQPQASQGQPSQSGSGR. Phosphoserine is present on residues Ser-1980, Ser-1986, and Ser-1987. Residues 2002 to 2012 show a composition bias toward gly residues; the sequence is SGHGHGQGQGQ. One copy of the Filaggrin 11 repeat lies at 2016–2070; sequence QQRESLHGQRGRSQSPFHPSHSIHWQSKCTISKKSSRLSGHYGRNHFQSTISGNQ. 3 stretches are compositionally biased toward polar residues: residues 2026 to 2048, 2061 to 2079, and 2100 to 2109; these read GRSQ…TISK, HFQS…SSRH, and LRSNSQSSIP. At Ser-2104 the chain carries Phosphoserine. Residues 2218–2259 form a Filaggrin 12 repeat; it reads DDSQYILFQKHLESPSFGNQSGFSPNERQLYTCNESIDSYHL.

This sequence belongs to the S100-fused protein family. The protein in the N-terminal section; belongs to the S-100 family. In terms of processing, deiminated by PADI1, PADI2 or PADI3 in vitro. The deiminated form is degraded by calpain-1/CAPN1 more quickly and into shorter peptides than the intact protein. Post-translationally, may be processed by calpain-1/CAPN1.

The protein resides in the cytoplasm. The protein localises to the cytoplasmic granule. Essential for normal cell-cell adhesion in the cornified cell layers. Important for proper integrity and mechanical strength of the stratum corneum of the epidermis. The chain is Filaggrin-2 (Flg2) from Mus musculus (Mouse).